A 290-amino-acid chain; its full sequence is Putative transport permease ycf38 (290 aa).

A run of 7 helical transmembrane segments spans residues 21–41, 46–66, 86–106, 133–153, 167–187, 194–213, and 261–281; these read VTSFFFIQELFVLVKRLFIQL, ITLISGILQPLLWLILFGALF, PGILVFTAFAGSLNSSLPLIF, FFISVLSFIQVFFIMLFGVFL, FFFLFLLIIGITTFSILLALL, LIAVIFVLNLPLLFSSTALA, and INIGQSLIILIIFDLVGFLLF. One can recognise an ABC transmembrane type-2 domain in the interval 46–284; that stretch reads ITLISGILQP…LVGFLLFKKI (239 aa).

It belongs to the ABC-2 integral membrane protein family.

It is found in the plastid. The protein localises to the cyanelle membrane. In Cyanophora paradoxa, this protein is Putative transport permease ycf38 (ycf38).